A 387-amino-acid polypeptide reads, in one-letter code: Protein PHYTOCHROME KINASE SUBSTRATE 3 (387 aa).

Disordered regions lie at residues 1-21 (MDAE…PQLL), 74-128 (HEKE…CNSQ), and 242-271 (LSTK…ASVA). Over residues 12–21 (QISSYKPQLL) the composition is skewed to polar residues. Residues 74–83 (HEKENTHDHP) are compositionally biased toward basic and acidic residues. A compositionally biased stretch (polar residues) spans 114 to 128 (HGTPSVRSESSCNSQ). Positions 242 to 261 (LSTKNNNHNNNGNNSSMSSN) are enriched in low complexity.

This sequence belongs to the PKS family.

Functionally, probably involved in the phytochrome signaling pathway. The polypeptide is Protein PHYTOCHROME KINASE SUBSTRATE 3 (PKS3) (Arabidopsis thaliana (Mouse-ear cress)).